Consider the following 235-residue polypeptide: Transmembrane protein 215 (235 aa).

2 consecutive transmembrane segments (helical) span residues 12–32 (LVVALVSVFLVFGFMFTVSGM) and 40–60 (IPLLAIGPAICLPGIAAIALA). The interval 99 to 146 (SDLESGKGSSDELAKKAGLRGKQLPQGPGEVPMASSVTTPTPTEEGEC) is disordered.

Its subcellular location is the membrane. The chain is Transmembrane protein 215 (Tmem215) from Mus musculus (Mouse).